We begin with the raw amino-acid sequence, 290 residues long: Small ribosomal subunit biogenesis GTPase RsgA (290 aa).

Residues 62–219 (RTCLKRPAVA…VADTPGFSRL (158 aa)) enclose the CP-type G domain. GTP is bound by residues 111-114 (NKAD) and 161-169 (GPSGVGKSS). Cys243, Cys248, His250, and Cys256 together coordinate Zn(2+).

Belongs to the TRAFAC class YlqF/YawG GTPase family. RsgA subfamily. Monomer. Associates with 30S ribosomal subunit, binds 16S rRNA. Zn(2+) serves as cofactor.

It is found in the cytoplasm. Functionally, one of several proteins that assist in the late maturation steps of the functional core of the 30S ribosomal subunit. Helps release RbfA from mature subunits. May play a role in the assembly of ribosomal proteins into the subunit. Circularly permuted GTPase that catalyzes slow GTP hydrolysis, GTPase activity is stimulated by the 30S ribosomal subunit. This chain is Small ribosomal subunit biogenesis GTPase RsgA, found in Moorella thermoacetica (strain ATCC 39073 / JCM 9320).